Reading from the N-terminus, the 441-residue chain is Histidinol dehydrogenase (441 aa).

Substrate-binding residues include Thr240, Gln262, and His265. 2 residues coordinate Zn(2+): Gln262 and His265. Residues Glu332 and His333 each act as proton acceptor in the active site. Substrate contacts are provided by His333, Asp366, Glu420, and His425. Zn(2+) is bound at residue Asp366. His425 lines the Zn(2+) pocket.

It belongs to the histidinol dehydrogenase family. Zn(2+) serves as cofactor.

It catalyses the reaction L-histidinol + 2 NAD(+) + H2O = L-histidine + 2 NADH + 3 H(+). Its pathway is amino-acid biosynthesis; L-histidine biosynthesis; L-histidine from 5-phospho-alpha-D-ribose 1-diphosphate: step 9/9. In terms of biological role, catalyzes the sequential NAD-dependent oxidations of L-histidinol to L-histidinaldehyde and then to L-histidine. In Streptomyces avermitilis (strain ATCC 31267 / DSM 46492 / JCM 5070 / NBRC 14893 / NCIMB 12804 / NRRL 8165 / MA-4680), this protein is Histidinol dehydrogenase.